We begin with the raw amino-acid sequence, 217 residues long: Probable cutinase 3 (217 aa).

Positions 1 to 17 (MSLRSLFVAGLATLALA) are cleaved as a signal peptide. Disulfide bonds link C39-C118 and C65-C79. S129 acts as the Nucleophile in catalysis. A disulfide bond links C180 and C187. D184 is a catalytic residue. The active-site Proton donor/acceptor is H197.

The protein belongs to the cutinase family.

The protein localises to the secreted. The enzyme catalyses cutin + H2O = cutin monomers.. Functionally, catalyzes the hydrolysis of complex carboxylic polyesters found in the cell wall of plants. Degrades cutin, a macromolecule that forms the structure of the plant cuticle. The polypeptide is Probable cutinase 3 (Aspergillus fumigatus (strain CBS 144.89 / FGSC A1163 / CEA10) (Neosartorya fumigata)).